Consider the following 550-residue polypeptide: GMP synthase [glutamine-hydrolyzing] (550 aa).

The Glutamine amidotransferase type-1 domain occupies 39-232 (RILILDFGSQ…VHKICGCGGL (194 aa)). Residue Cys-116 is the Nucleophile of the active site. Residues His-206 and Glu-208 contribute to the active site. A GMPS ATP-PPase domain is found at 233–425 (WTPEHIIDLR…LGLPHSMIYR (193 aa)). 260 to 266 (SGGVDSS) is a binding site for ATP.

Homodimer.

The catalysed reaction is XMP + L-glutamine + ATP + H2O = GMP + L-glutamate + AMP + diphosphate + 2 H(+). It functions in the pathway purine metabolism; GMP biosynthesis; GMP from XMP (L-Gln route): step 1/1. Its function is as follows. Catalyzes the synthesis of GMP from XMP. In Acinetobacter baylyi (strain ATCC 33305 / BD413 / ADP1), this protein is GMP synthase [glutamine-hydrolyzing].